Here is a 303-residue protein sequence, read N- to C-terminus: 5-dehydro-4-deoxyglucarate dehydratase (303 aa).

It belongs to the DapA family.

The catalysed reaction is 5-dehydro-4-deoxy-D-glucarate + H(+) = 2,5-dioxopentanoate + CO2 + H2O. It participates in carbohydrate acid metabolism; D-glucarate degradation; 2,5-dioxopentanoate from D-glucarate: step 2/2. The chain is 5-dehydro-4-deoxyglucarate dehydratase from Pseudomonas putida (Arthrobacter siderocapsulatus).